The chain runs to 156 residues: Small ribosomal subunit protein uS7 (156 aa).

This sequence belongs to the universal ribosomal protein uS7 family. In terms of assembly, part of the 30S ribosomal subunit. Contacts proteins S9 and S11.

One of the primary rRNA binding proteins, it binds directly to 16S rRNA where it nucleates assembly of the head domain of the 30S subunit. Is located at the subunit interface close to the decoding center, probably blocks exit of the E-site tRNA. This is Small ribosomal subunit protein uS7 from Syntrophus aciditrophicus (strain SB).